The primary structure comprises 355 residues: MKKNKRLMVMAGGTGGHVFPGLAVAKKLQQQGWEIRWLGTADRMEAELVPKHGIDIDFIKVKGLRGQGIKRLVLAPFQILNAIFQAKAHIKRWQPDAVLGMGGYVSGPGGIAAWLSGIPVVLHEQNAVAGLTNHWLAKIAKKVFQAFPGAFKDAPVVGNPVREDVVALPDPMQRMQDREGAIRILVMGGSQGARILNQTMPQVMAQLGSGFEIRHQAGKGSADEVRLAYQQAGVEHVEVSEFIDDVAAQYAWADLLVCRSGALTVSEVSAAGVGAIFIPFMHKDRQQALNADHLVACGAALMIEQPQLTVDKLAGEIQKLGRDTLLSMALHARAAAQNNADQVVADAIVALTEQK.

Residues 14-16 (TGG), N126, R162, S190, I243, 262-267 (ALTVSE), and Q287 contribute to the UDP-N-acetyl-alpha-D-glucosamine site.

Belongs to the glycosyltransferase 28 family. MurG subfamily.

It localises to the cell inner membrane. The catalysed reaction is di-trans,octa-cis-undecaprenyl diphospho-N-acetyl-alpha-D-muramoyl-L-alanyl-D-glutamyl-meso-2,6-diaminopimeloyl-D-alanyl-D-alanine + UDP-N-acetyl-alpha-D-glucosamine = di-trans,octa-cis-undecaprenyl diphospho-[N-acetyl-alpha-D-glucosaminyl-(1-&gt;4)]-N-acetyl-alpha-D-muramoyl-L-alanyl-D-glutamyl-meso-2,6-diaminopimeloyl-D-alanyl-D-alanine + UDP + H(+). Its pathway is cell wall biogenesis; peptidoglycan biosynthesis. Functionally, cell wall formation. Catalyzes the transfer of a GlcNAc subunit on undecaprenyl-pyrophosphoryl-MurNAc-pentapeptide (lipid intermediate I) to form undecaprenyl-pyrophosphoryl-MurNAc-(pentapeptide)GlcNAc (lipid intermediate II). The polypeptide is UDP-N-acetylglucosamine--N-acetylmuramyl-(pentapeptide) pyrophosphoryl-undecaprenol N-acetylglucosamine transferase (Vibrio vulnificus (strain CMCP6)).